Reading from the N-terminus, the 112-residue chain is Small ribosomal subunit protein bS6 (112 aa).

It belongs to the bacterial ribosomal protein bS6 family.

Its function is as follows. Binds together with bS18 to 16S ribosomal RNA. This Christiangramia forsetii (strain DSM 17595 / CGMCC 1.15422 / KT0803) (Gramella forsetii) protein is Small ribosomal subunit protein bS6.